A 508-amino-acid chain; its full sequence is Cobyric acid synthase (508 aa).

In terms of domain architecture, GATase cobBQ-type spans 266-464; it reads SLRIAVVAYP…AHGLFESTEV (199 aa). Residue C347 is the Nucleophile of the active site. H456 is a catalytic residue.

The protein belongs to the CobB/CobQ family. CobQ subfamily.

Its pathway is cofactor biosynthesis; adenosylcobalamin biosynthesis. Catalyzes amidations at positions B, D, E, and G on adenosylcobyrinic A,C-diamide. NH(2) groups are provided by glutamine, and one molecule of ATP is hydrogenolyzed for each amidation. The sequence is that of Cobyric acid synthase from Methylibium petroleiphilum (strain ATCC BAA-1232 / LMG 22953 / PM1).